A 522-amino-acid chain; its full sequence is tRNA-2-methylthio-N(6)-dimethylallyladenosine synthase (522 aa).

The segment covering 1 to 26 (MSLTIPSPASGTSTSATTDTAPAAAP) has biased composition (low complexity). The tract at residues 1 to 27 (MSLTIPSPASGTSTSATTDTAPAAAPQ) is disordered. One can recognise an MTTase N-terminal domain in the interval 28 to 143 (RTYQVRTFGC…LPALLDRARH (116 aa)). [4Fe-4S] cluster is bound by residues Cys37, Cys72, Cys106, Cys180, Cys184, and Cys187. In terms of domain architecture, Radical SAM core spans 166-396 (RDSVYSGWVS…TALQDRIAAE (231 aa)). Positions 399 to 469 (ARQLGRRVEV…AFHLVADPAS (71 aa)) constitute a TRAM domain. A disordered region spans residues 481–522 (GDAWDRSQADSCGAPVAGGGAGSNGGKGGVSLGMPALPVRRS). Residues 496 to 511 (VAGGGAGSNGGKGGVS) are compositionally biased toward gly residues.

It belongs to the methylthiotransferase family. MiaB subfamily. As to quaternary structure, monomer. [4Fe-4S] cluster is required as a cofactor.

The protein resides in the cytoplasm. The catalysed reaction is N(6)-dimethylallyladenosine(37) in tRNA + (sulfur carrier)-SH + AH2 + 2 S-adenosyl-L-methionine = 2-methylsulfanyl-N(6)-dimethylallyladenosine(37) in tRNA + (sulfur carrier)-H + 5'-deoxyadenosine + L-methionine + A + S-adenosyl-L-homocysteine + 2 H(+). Catalyzes the methylthiolation of N6-(dimethylallyl)adenosine (i(6)A), leading to the formation of 2-methylthio-N6-(dimethylallyl)adenosine (ms(2)i(6)A) at position 37 in tRNAs that read codons beginning with uridine. This is tRNA-2-methylthio-N(6)-dimethylallyladenosine synthase from Arthrobacter sp. (strain FB24).